The primary structure comprises 465 residues: Asparagine--tRNA ligase (465 aa).

It belongs to the class-II aminoacyl-tRNA synthetase family. In terms of assembly, homodimer.

The protein resides in the cytoplasm. It catalyses the reaction tRNA(Asn) + L-asparagine + ATP = L-asparaginyl-tRNA(Asn) + AMP + diphosphate + H(+). In Clostridium perfringens (strain ATCC 13124 / DSM 756 / JCM 1290 / NCIMB 6125 / NCTC 8237 / Type A), this protein is Asparagine--tRNA ligase.